The following is a 244-amino-acid chain: 3-oxoacyl-[acyl-carrier-protein] reductase FabG (244 aa).

NADP(+) contacts are provided by residues 12-15 (GASR) and T37. G50 and G53 together coordinate Ca(2+). NADP(+)-binding positions include 59–60 (NV) and N86. Substrate is bound at residue S138. Residue N145 participates in Ca(2+) binding. Y151 (proton acceptor) is an active-site residue. Residues 151-155 (YAAAK) and I184 each bind NADP(+). Residues E233 and T234 each coordinate Ca(2+).

The protein belongs to the short-chain dehydrogenases/reductases (SDR) family. As to quaternary structure, homotetramer.

The catalysed reaction is a (3R)-hydroxyacyl-[ACP] + NADP(+) = a 3-oxoacyl-[ACP] + NADPH + H(+). The enzyme catalyses 3-oxobutanoyl-[ACP] + NADPH + H(+) = (3R)-hydroxybutanoyl-[ACP] + NADP(+). It catalyses the reaction 3-oxopentanoyl-[ACP] + NADPH + H(+) = (3R)-hydroxypentanoyl-[ACP] + NADP(+). It carries out the reaction 3-oxohexanoyl-[ACP] + NADPH + H(+) = (3R)-hydroxyhexanoyl-[ACP] + NADP(+). The catalysed reaction is 3-oxoheptanoyl-[ACP] + NADPH + H(+) = (3R)-hydroxyheptanoyl-[ACP] + NADP(+). The enzyme catalyses 3-oxooctanoyl-[ACP] + NADPH + H(+) = (3R)-hydroxyoctanoyl-[ACP] + NADP(+). It catalyses the reaction 3-oxononanoyl-[ACP] + NADPH + H(+) = (3R)-hydroxynonanoyl-[ACP] + NADP(+). It carries out the reaction 3-oxodecanoyl-[ACP] + NADPH + H(+) = (3R)-hydroxydecanoyl-[ACP] + NADP(+). The catalysed reaction is 3-oxohexadecanoyl-[ACP] + NADPH + H(+) = (3R)-hydroxyhexadecanoyl-[ACP] + NADP(+). The enzyme catalyses 3-oxo-(9Z)-hexadecenoyl-[ACP] + NADPH + H(+) = (3R)-hydroxy-(9Z)-hexadecenoyl-[ACP] + NADP(+). It catalyses the reaction 4-methyl-3-oxopentanoyl-[ACP] + NADPH + H(+) = (3R)-hydroxy-4-methylpentanoyl-[ACP] + NADP(+). It carries out the reaction 5-methyl-3-oxohexanoyl-[ACP] + NADPH + H(+) = (3R)-hydroxy-5-methylhexanoyl-[ACP] + NADP(+). The catalysed reaction is 4-methyl-3-oxohexanoyl-[ACP] + NADPH + H(+) = (3R)-hydroxy-4-methylhexanoyl-[ACP] + NADP(+). Its pathway is lipid metabolism; fatty acid biosynthesis. Its activity is regulated as follows. Inhibited by cinnamic acid derivatives. In terms of biological role, catalyzes the NADPH-dependent reduction of beta-ketoacyl-ACP substrates to beta-hydroxyacyl-ACP products, the first reductive step in the elongation cycle of fatty acid biosynthesis. This is 3-oxoacyl-[acyl-carrier-protein] reductase FabG (fabG) from Escherichia coli (strain K12).